Here is a 325-residue protein sequence, read N- to C-terminus: Small ribosomal subunit protein uS2 (325 aa).

Residues 212–226 (KEEQAKAEAERERLA) are compositionally biased toward basic and acidic residues. The interval 212 to 325 (KEEQAKAEAE…TEPKASTGNW (114 aa)) is disordered. 2 stretches are compositionally biased toward low complexity: residues 234–247 (QPAA…QWAD) and 261–289 (PVTT…TGSG). Polar residues predominate over residues 290 to 300 (FNQDDWSVPTT).

This sequence belongs to the universal ribosomal protein uS2 family. In terms of assembly, component of the small ribosomal subunit. Mature ribosomes consist of a small (40S) and a large (60S) subunit. The 40S subunit contains about 33 different proteins and 1 molecule of RNA (18S). The 60S subunit contains about 49 different proteins and 3 molecules of RNA (28S, 5.8S and 5S). Interacts with ribosomal protein S21.

The protein resides in the cytoplasm. Functionally, required for the assembly and/or stability of the 40S ribosomal subunit. Required for the processing of the 20S rRNA-precursor to mature 18S rRNA in a late step of the maturation of 40S ribosomal subunits. This chain is Small ribosomal subunit protein uS2, found in Suberites domuncula (Sponge).